A 173-amino-acid chain; its full sequence is Regulator of ribonuclease activity A (173 aa).

Belongs to the RraA family. Homotrimer. Binds to both RNA-binding sites in the C-terminal region of Rne and to RhlB.

The protein localises to the cytoplasm. Globally modulates RNA abundance by binding to RNase E (Rne) and regulating its endonucleolytic activity. Can modulate Rne action in a substrate-dependent manner by altering the composition of the degradosome. Modulates RNA-binding and helicase activities of the degradosome. This Vibrio vulnificus (strain CMCP6) protein is Regulator of ribonuclease activity A.